The sequence spans 342 residues: Succinoglycan biosynthesis protein ExoU (342 aa).

This sequence belongs to the glycosyltransferase 2 family.

It localises to the cytoplasm. Its pathway is glycan metabolism; exopolysaccharide biosynthesis. Functionally, glycosyltransferase required for the synthesis of succinoglycan (EPS I). Needed for the addition of the sixth sugar (glucose), catalyzes the formation of a beta-1,6 linkage between the fifth and sixth sugar. This Rhizobium meliloti (strain 1021) (Ensifer meliloti) protein is Succinoglycan biosynthesis protein ExoU (exoU).